Here is a 291-residue protein sequence, read N- to C-terminus: 4-hydroxy-tetrahydrodipicolinate synthase (291 aa).

Residue Thr-45 participates in pyruvate binding. Tyr-131 functions as the Proton donor/acceptor in the catalytic mechanism. Catalysis depends on Lys-159, which acts as the Schiff-base intermediate with substrate. Ile-202 provides a ligand contact to pyruvate.

This sequence belongs to the DapA family. In terms of assembly, homotetramer; dimer of dimers.

Its subcellular location is the cytoplasm. It catalyses the reaction L-aspartate 4-semialdehyde + pyruvate = (2S,4S)-4-hydroxy-2,3,4,5-tetrahydrodipicolinate + H2O + H(+). It functions in the pathway amino-acid biosynthesis; L-lysine biosynthesis via DAP pathway; (S)-tetrahydrodipicolinate from L-aspartate: step 3/4. Functionally, catalyzes the condensation of (S)-aspartate-beta-semialdehyde [(S)-ASA] and pyruvate to 4-hydroxy-tetrahydrodipicolinate (HTPA). The sequence is that of 4-hydroxy-tetrahydrodipicolinate synthase from Methanococcoides burtonii (strain DSM 6242 / NBRC 107633 / OCM 468 / ACE-M).